The sequence spans 268 residues: Large ribosomal subunit protein uL3 (268 aa).

An N5-methylglutamine modification is found at Gln156. Positions Val242–Ala259 are enriched in low complexity. A disordered region spans residues Val242 to Ala268.

The protein belongs to the universal ribosomal protein uL3 family. In terms of assembly, part of the 50S ribosomal subunit. Forms a cluster with proteins L14 and L19. Methylated by PrmB.

In terms of biological role, one of the primary rRNA binding proteins, it binds directly near the 3'-end of the 23S rRNA, where it nucleates assembly of the 50S subunit. This chain is Large ribosomal subunit protein uL3, found in Maricaulis maris (strain MCS10) (Caulobacter maris).